The sequence spans 359 residues: Phospho-N-acetylmuramoyl-pentapeptide-transferase (359 aa).

10 helical membrane passes run 27–47, 70–90, 97–117, 133–153, 167–187, 198–218, 238–258, 261–281, 287–307, and 336–356; these read GAFF…INAL, TPTM…LLWA, VWLV…DDWA, LAIG…VHPE, VLLN…VGSA, GLAI…AYAV, LLIF…YNAP, AVFM…AIAV, IVLA…IVQV, and QVVI…LATL.

Belongs to the glycosyltransferase 4 family. MraY subfamily. The cofactor is Mg(2+).

It is found in the cell inner membrane. It carries out the reaction UDP-N-acetyl-alpha-D-muramoyl-L-alanyl-gamma-D-glutamyl-meso-2,6-diaminopimeloyl-D-alanyl-D-alanine + di-trans,octa-cis-undecaprenyl phosphate = di-trans,octa-cis-undecaprenyl diphospho-N-acetyl-alpha-D-muramoyl-L-alanyl-D-glutamyl-meso-2,6-diaminopimeloyl-D-alanyl-D-alanine + UMP. It participates in cell wall biogenesis; peptidoglycan biosynthesis. Catalyzes the initial step of the lipid cycle reactions in the biosynthesis of the cell wall peptidoglycan: transfers peptidoglycan precursor phospho-MurNAc-pentapeptide from UDP-MurNAc-pentapeptide onto the lipid carrier undecaprenyl phosphate, yielding undecaprenyl-pyrophosphoryl-MurNAc-pentapeptide, known as lipid I. This is Phospho-N-acetylmuramoyl-pentapeptide-transferase from Jannaschia sp. (strain CCS1).